A 115-amino-acid chain; its full sequence is Large ribosomal subunit protein P1 (115 aa).

Positions 56-73 (QAAAAPVPASGGAAAPAE) are enriched in low complexity. Positions 56–115 (QAAAAPVPASGGAAAPAEGDADEADEADEEAEEEAADDGGDDDDDEDDEASGEGLGELFG) are disordered. Over residues 74–106 (GDADEADEADEEAEEEAADDGGDDDDDEDDEAS) the composition is skewed to acidic residues.

This sequence belongs to the eukaryotic ribosomal protein P1/P2 family. In terms of assembly, part of the 50S ribosomal subunit. Homodimer, it forms part of the ribosomal stalk which helps the ribosome interact with GTP-bound translation factors. Forms a heptameric uL10/P0(P1)2(P1)2(P1)2 complex, where uL10/P0 forms an elongated spine to which the P1 dimers bind in a sequential fashion.

Its function is as follows. Forms part of the ribosomal stalk, playing a central role in the interaction of the ribosome with GTP-bound translation factors. This Haloarcula marismortui (strain ATCC 43049 / DSM 3752 / JCM 8966 / VKM B-1809) (Halobacterium marismortui) protein is Large ribosomal subunit protein P1.